The sequence spans 573 residues: Formate--tetrahydrofolate ligase 3 (573 aa).

66–73 (TPLGEGKT) serves as a coordination point for ATP.

It belongs to the formate--tetrahydrofolate ligase family.

It carries out the reaction (6S)-5,6,7,8-tetrahydrofolate + formate + ATP = (6R)-10-formyltetrahydrofolate + ADP + phosphate. It participates in one-carbon metabolism; tetrahydrofolate interconversion. This is Formate--tetrahydrofolate ligase 3 from Rubrobacter xylanophilus (strain DSM 9941 / JCM 11954 / NBRC 16129 / PRD-1).